The primary structure comprises 224 residues: V-type proton ATPase subunit S1-like protein (224 aa).

Residues 147-167 (PAFLIGLAMSLILLLVLAYAL) traverse the membrane as a helical segment.

The protein belongs to the vacuolar ATPase subunit S1 family.

It localises to the membrane. The sequence is that of V-type proton ATPase subunit S1-like protein (ATP6AP1L) from Homo sapiens (Human).